A 346-amino-acid polypeptide reads, in one-letter code: GTPase Obg (346 aa).

Residues 1–158 (MFVDECVVKL…GTYRLVLKSI (158 aa)) form the Obg domain. The OBG-type G domain occupies 159–332 (ADVGLVGFPN…LKKELLKRVT (174 aa)). GTP is bound by residues 165 to 172 (GFPNAGKS), 190 to 194 (FTTLH), 216 to 219 (DVPG), 286 to 289 (NKMD), and 313 to 315 (SCL). Mg(2+)-binding residues include serine 172 and threonine 192.

It belongs to the TRAFAC class OBG-HflX-like GTPase superfamily. OBG GTPase family. Monomer. It depends on Mg(2+) as a cofactor.

It localises to the cytoplasm. Functionally, an essential GTPase which binds GTP, GDP and possibly (p)ppGpp with moderate affinity, with high nucleotide exchange rates and a fairly low GTP hydrolysis rate. Plays a role in control of the cell cycle, stress response, ribosome biogenesis and in those bacteria that undergo differentiation, in morphogenesis control. This chain is GTPase Obg, found in Opitutus terrae (strain DSM 11246 / JCM 15787 / PB90-1).